Reading from the N-terminus, the 184-residue chain is MKNLTDSFVFLGHWPSAGSFGFNTDILATNLINLSVVLGVLIFFGKGVLSDLLDNRKQRILSTIRNSEELCGGAVEQLEKARARLRKVEREAEEFRVNGYSEIEQEKMNLINAAYQNLEQLENYKNETIHFEQQRAINQVQQRVFQQALQGALGTLNNCLNGELHLRTIGANIGILGAMKEITD.

Residues 27–49 traverse the membrane as a helical segment; sequence LATNLINLSVVLGVLIFFGKGVL.

Belongs to the ATPase B chain family. F-type ATPases have 2 components, F(1) - the catalytic core - and F(0) - the membrane proton channel. F(1) has five subunits: alpha(3), beta(3), gamma(1), delta(1), epsilon(1). F(0) has four main subunits: a(1), b(1), b'(1) and c(10-14). The alpha and beta chains form an alternating ring which encloses part of the gamma chain. F(1) is attached to F(0) by a central stalk formed by the gamma and epsilon chains, while a peripheral stalk is formed by the delta, b and b' chains.

It is found in the plastid. Its subcellular location is the chloroplast thylakoid membrane. Its function is as follows. F(1)F(0) ATP synthase produces ATP from ADP in the presence of a proton or sodium gradient. F-type ATPases consist of two structural domains, F(1) containing the extramembraneous catalytic core and F(0) containing the membrane proton channel, linked together by a central stalk and a peripheral stalk. During catalysis, ATP synthesis in the catalytic domain of F(1) is coupled via a rotary mechanism of the central stalk subunits to proton translocation. In terms of biological role, component of the F(0) channel, it forms part of the peripheral stalk, linking F(1) to F(0). The sequence is that of ATP synthase subunit b, chloroplastic from Nymphaea alba (White water-lily).